Reading from the N-terminus, the 363-residue chain is Probable L-tyrosine/L-aspartate decarboxylase (363 aa).

Position 224 is an N6-(pyridoxal phosphate)lysine (lysine 224).

It belongs to the group II decarboxylase family. MfnA subfamily. It depends on pyridoxal 5'-phosphate as a cofactor.

It catalyses the reaction L-tyrosine + H(+) = tyramine + CO2. It carries out the reaction L-aspartate + H(+) = beta-alanine + CO2. It participates in cofactor biosynthesis; methanofuran biosynthesis. It functions in the pathway cofactor biosynthesis; coenzyme A biosynthesis. Functionally, catalyzes the decarboxylation of L-tyrosine to produce tyramine for methanofuran biosynthesis. Can also catalyze the decarboxylation of L-aspartate to produce beta-alanine for coenzyme A (CoA) biosynthesis. This chain is Probable L-tyrosine/L-aspartate decarboxylase, found in Methanosphaerula palustris (strain ATCC BAA-1556 / DSM 19958 / E1-9c).